The following is a 903-amino-acid chain: MTPALTETVPQGPGAHLAPSFALQSLNSDTIICMDNSQAVEHISLPKANGPKVADKKQLLKTEFMNGNSIGSQTSGHYQTVFLLTSNTALSLPNKGSSTWKMENQDVCKQRFHITKGSPSLPNGMSYQPERKAKRELFPGCVSQLLADVHKLWDVSLTKTQGTEGICLPECMLNGHRGTESLAVSSCPSLISHVSANVPSVASVKAVGTNLLLKCLNHQQVLLNRARRNQKRLQSYLAQHAVQHFNQQIRAFVNHQIHDKPAGIFDSQPTKVINNNLNVGSSGISSATSDGLKNGVYHSVKRFSVSAKEILKQIKKDFDSDATGSSSDEDWDEKARQNSDECNAERSWLSVRTRIGSRWVWLQSQISELEYKIQHLTDLHSQIRKAKGTLKFEEPSKGNFKQKLWLPDSEMLLSLAERMPKSPQGTNPSPTNDLDMSPSSPTLLLRNIEKQSARLTEIVSSLTVPLLSPNDSAKSSVYKRVANGFSDRMHTDGFPSFNEFCEQQVKRRKKVRVKASSALGSNLCSSARTRPLQALKKRKLYKLSAEYSYVNKVNLFSSPVYQYEELPSNGNHCSTWKCSKVLHRPWLMAQNACEADSCFHPVLSFPYELPLNVHLAALPMKNHNIKGNSVDSIALRGELDKSQSYVSASWSTECTSSYSPDPQTPAHSWERRHRSESEADAALLESGLTTPVSTQKSSAQQLLAHESSSMVCAARRRLRSGNSYDINNIVIPMSLIAPTKLEKLKYKEIITPSWKEVVLEPLESPAHDMPEDLSDEAYISRHEKYELKEKARWSLWDHSKRPKRNRSSSYSFGTSPRTVLLSCECSCSPNSQAPSEALPSDTGGYRTLHFSHESPKGKTIHWERRVFPLTEEPAMELLGKCPSQAQVSTVDNQQCPKNDCDYT.

Disordered regions lie at residues 319 to 343, 419 to 441, and 652 to 676; these read DSDA…DECN, MPKS…PSSP, and TECT…HRSE. Polar residues-rich tracts occupy residues 423–441 and 652–661; these read PQGT…PSSP and TECTSSYSPD. Residues 748 to 862 form the PEHE domain; the sequence is EIITPSWKEV…ESPKGKTIHW (115 aa).

The chain is KAT8 regulatory NSL complex subunit 1-like protein (kansl1l) from Xenopus tropicalis (Western clawed frog).